The sequence spans 222 residues: 2-hydroxy-3-keto-5-methylthiopentenyl-1-phosphate phosphatase (222 aa).

Belongs to the HAD-like hydrolase superfamily. MtnX family.

The catalysed reaction is 2-hydroxy-5-methylsulfanyl-3-oxopent-1-enyl phosphate + H2O = 1,2-dihydroxy-5-(methylsulfanyl)pent-1-en-3-one + phosphate. It functions in the pathway amino-acid biosynthesis; L-methionine biosynthesis via salvage pathway; L-methionine from S-methyl-5-thio-alpha-D-ribose 1-phosphate: step 4/6. Dephosphorylates 2-hydroxy-3-keto-5-methylthiopentenyl-1-phosphate (HK-MTPenyl-1-P) yielding 1,2-dihydroxy-3-keto-5-methylthiopentene (DHK-MTPene). The chain is 2-hydroxy-3-keto-5-methylthiopentenyl-1-phosphate phosphatase from Brevibacillus brevis (strain 47 / JCM 6285 / NBRC 100599).